Consider the following 112-residue polypeptide: Abdominal ganglion neuropeptides L5-67 (112 aa).

The N-terminal stretch at 1–23 (MKTAVLLVCLAYVMAAILSLCAS) is a signal peptide. At Phe33 the chain carries Phenylalanine amide.

The prohormone is proteolytically cleaved in 2 steps, yielding first 2 products: luqin and PRMP. In the second step, PRMP is cleaved to yield luqin-B and luqin-C. Neurons L2-4 and L6, also called giant dorsal LUQ (Left Upper Quadrant) neurons of the abdominal ganglion. Also expressed in smaller neurons in the CNS and in peripheral organs such as the kidney.

The protein resides in the secreted. This chain is Abdominal ganglion neuropeptides L5-67, found in Aplysia californica (California sea hare).